The following is a 686-amino-acid chain: ATP-dependent DNA helicase RecG (686 aa).

The wedge domain stretch occupies residues 50 to 149 (TVIDLNQAED…GTQTQENADV (100 aa)). The region spanning 279-439 (DLKAPIRMHR…VFGEMDVSSI (161 aa)) is the Helicase ATP-binding domain. 292-299 (GDVGSGKT) is an ATP binding site. The DEAH box signature appears at 392–395 (DEQH). The region spanning 462 to 618 (VLMQMTSELK…GFELSERDLE (157 aa)) is the Helicase C-terminal domain.

It belongs to the helicase family. RecG subfamily. Monomer.

The enzyme catalyses Couples ATP hydrolysis with the unwinding of duplex DNA by translocating in the 3'-5' direction.. It carries out the reaction ATP + H2O = ADP + phosphate + H(+). In terms of biological role, plays a critical role in recombination and DNA repair. Helps process Holliday junction intermediates to mature products by catalyzing branch migration. Has replication fork regression activity, unwinds stalled or blocked replication forks to make a HJ that can be resolved. Has a DNA unwinding activity characteristic of a DNA helicase with 3'-5' polarity. The sequence is that of ATP-dependent DNA helicase RecG from Staphylococcus aureus (strain NCTC 8325 / PS 47).